The following is an 82-amino-acid chain: Beta-insect depressant toxin LqqIT2 (82 aa).

Residues 1–21 form the signal peptide; sequence MKLLLLLIVSASMLIESLVNA. The region spanning 22–82 is the LCN-type CS-alpha/beta domain; sequence DGYIRKRDGC…TWKSETNTCG (61 aa). 4 disulfide bridges follow: cysteine 31-cysteine 81, cysteine 35-cysteine 56, cysteine 42-cysteine 63, and cysteine 46-cysteine 65.

This sequence belongs to the long (4 C-C) scorpion toxin superfamily. Sodium channel inhibitor family. Beta subfamily. As to expression, expressed by the venom gland.

It localises to the secreted. Its function is as follows. Depressant insect beta-toxins cause a transient contraction paralysis followed by a slow flaccid paralysis. They bind voltage-independently at site-4 of sodium channels and shift the voltage of activation toward more negative potentials thereby affecting sodium channel activation and promoting spontaneous and repetitive firing. Aside from typical beta-toxin effects, this toxin also affects the inactivation process and ion selectivity of the insect voltage-gated sodium channel. This toxin is active only on insects. Is active on the insect voltage-gated sodium channel para. In vivo, when injected intraperitoneally, it exhibits analgesic activity, increasing hot plate and tail flick withdrawal latencies in a dose-dependent fashion. This phenomenon might be partly due to an inhibitory mechanism activated by noxious stimuli. The polypeptide is Beta-insect depressant toxin LqqIT2 (Leiurus quinquestriatus quinquestriatus (Egyptian scorpion)).